A 102-amino-acid polypeptide reads, in one-letter code: Protein PDF (102 aa).

The signal sequence occupies residues 1–24; it reads MARYTYLVALVLLAICCQWGYCGA. Alanine 100 is modified (alanine amide).

The protein belongs to the arthropod PDH family. Predominantly expressed in adult head. Expressed at higher level in males than in females. In adult brain, it is specifically expressed in the ventral lateral neurons (LNvs) as well as in 2-4 tritocerebral cells and 4-6 abdominal cells.

It is found in the secreted. In terms of biological role, neuropeptide PDF is the main transmitter regulating circadian locomotor rhythms. Required to maintain behavioral rhythms under constant conditions by coordinating pacemaker interactions in the circadian system. Together with CCHa1, involved in regulating intensity and periodicity of daytime activity, possibly by modulating rhythmic expression of circadian protein PER/period in a subset of clock neurons, but not TIM/timeless. Acts on small and large ventral lateral neurons to control sleep and regulates the state transition from sleep to wake. This Drosophila melanogaster (Fruit fly) protein is Protein PDF (Pdf).